The chain runs to 119 residues: Developmental pluripotency-associated protein 5B/5C (119 aa).

Residues 24-86 form the KH; atypical domain; sequence PEVFQVQSLV…SIKVRAKWLL (63 aa).

This sequence belongs to the KHDC1 family.

The protein resides in the cytoplasm. Its function is as follows. Involved in the maintenance of embryonic stem (ES) cell pluripotency. Dispensable for self-renewal of pluripotent ES cells and establishment of germ cells. Associates with specific target mRNAs. This Mus musculus (Mouse) protein is Developmental pluripotency-associated protein 5B/5C.